A 184-amino-acid chain; its full sequence is Ras-related protein Rap-1b (184 aa).

10-18 (GSGGVGKSA) contributes to the GTP binding site. The interaction with KRIT1 stretch occupies residues 25 to 67 (QGIFVEKYDPTIEDSYRKQVEVDAQQCMLEILDTAGTEQFTAM). The Effector region signature appears at 32–40 (YDPTIEDSY). Residues 57 to 61 (DTAGT), 116 to 119 (NKCD), and 147 to 149 (SAK) each bind GTP. The residue at position 179 (serine 179) is a Phosphoserine; by PKA. Cysteine 181 carries the post-translational modification Cysteine methyl ester. Residue cysteine 181 is the site of S-geranylgeranyl cysteine attachment. A propeptide spans 182-184 (QLL) (removed in mature form).

In terms of assembly, heterodimer with RAP1GAP. Interacts with EPAC2. Interacts with SGSM1. Interacts with SGSM2. Interacts with SGSM3. Interacts with KRIT1. Interacts with RAP1GDS1.

It localises to the cell membrane. The protein resides in the cytoplasm. Its subcellular location is the cytosol. The protein localises to the cell junction. It catalyses the reaction GTP + H2O = GDP + phosphate + H(+). Its activity is regulated as follows. Activated by guanine nucleotide-exchange factor (GEF) EPAC2 in a cAMP-dependent manner. In terms of biological role, GTP-binding protein that possesses intrinsic GTPase activity. Contributes to the polarizing activity of KRIT1 and CDH5 in the establishment and maintenance of correct endothelial cell polarity and vascular lumen. Required for the localization of phosphorylated PRKCZ, PARD3 and TIAM1 to the cell junction. Plays a role in the establishment of basal endothelial barrier function. The chain is Ras-related protein Rap-1b (RAP1B) from Bos taurus (Bovine).